The chain runs to 314 residues: Nodulation protein D 1 (314 aa).

Residues 6–63 form the HTH lysR-type domain; the sequence is LDLNLLVALDALMTERNLTAAARKIHLSQPAMSAAVARLRTYFGDELFTMRGRELVPT. The H-T-H motif DNA-binding region spans 23–42; sequence LTAAARKIHLSQPAMSAAVA.

It belongs to the LysR transcriptional regulatory family.

In terms of biological role, nodD regulates the expression of the nodABCFE genes which encode other nodulation proteins. NodD is also a negative regulator of its own expression. Binds flavonoids as inducers. This chain is Nodulation protein D 1 (nodD1), found in Bradyrhizobium sp. (strain NC92).